The following is a 280-amino-acid chain: Lacto-N-neotetraose biosynthesis glycosyltransferase LgtE (280 aa).

It belongs to the glycosyltransferase 25 family.

It functions in the pathway glycan metabolism; lacto-N-neotetraose biosynthesis. The protein operates within bacterial outer membrane biogenesis; lipooligosaccharide biosynthesis. Its function is as follows. Adds the first galactose to the lacto-N-tetraose chain in lipooligosaccharide (LOS). This Neisseria gonorrhoeae protein is Lacto-N-neotetraose biosynthesis glycosyltransferase LgtE (lgtE).